Consider the following 183-residue polypeptide: Copper transporter 4 (183 aa).

Positions 1-21 (MAMPMPMPPPGPGGDAPPAPT) are disordered. 2 helical membrane-spanning segments follow: residues 56–76 (VGMYFLCLLLVLALAALAEAL) and 115–135 (LAYLVMLAVMSFNAGVLLAAV).

It belongs to the copper transporter (Ctr) (TC 1.A.56) family. SLC31A subfamily.

Its subcellular location is the membrane. Involved in the transport of copper. In Oryza sativa subsp. japonica (Rice), this protein is Copper transporter 4 (COPT4).